We begin with the raw amino-acid sequence, 296 residues long: GTPase Era (296 aa).

The region spanning 3–170 (KSGFVTIVGR…KELMFKYIPE (168 aa)) is the Era-type G domain. The segment at 11–18 (GRPNVGKS) is G1. 11-18 (GRPNVGKS) provides a ligand contact to GTP. Residues 37–41 (QTTRN) form a G2 region. A G3 region spans residues 58-61 (DTPG). GTP-binding positions include 58-62 (DTPGI) and 120-123 (NKID). The interval 120–123 (NKID) is G4. The interval 149–151 (ISA) is G5. The region spanning 201–278 (LSEEVPHGIA…YIRLWVKVKE (78 aa)) is the KH type-2 domain.

This sequence belongs to the TRAFAC class TrmE-Era-EngA-EngB-Septin-like GTPase superfamily. Era GTPase family. In terms of assembly, monomer.

It localises to the cytoplasm. The protein resides in the cell membrane. Its function is as follows. An essential GTPase that binds both GDP and GTP, with rapid nucleotide exchange. Plays a role in 16S rRNA processing and 30S ribosomal subunit biogenesis and possibly also in cell cycle regulation and energy metabolism. The polypeptide is GTPase Era (Clostridium botulinum (strain Loch Maree / Type A3)).